A 501-amino-acid chain; its full sequence is Ribose import ATP-binding protein RbsA (501 aa).

ABC transporter domains lie at 5–241 (LQLQ…VGRK) and 252–495 (APGE…VGKQ). Position 37-44 (37-44 (GENGAGKS)) interacts with ATP.

It belongs to the ABC transporter superfamily. Ribose importer (TC 3.A.1.2.1) family. As to quaternary structure, the complex is composed of an ATP-binding protein (RbsA), two transmembrane proteins (RbsC) and a solute-binding protein (RbsB).

It is found in the cell inner membrane. The enzyme catalyses D-ribose(out) + ATP + H2O = D-ribose(in) + ADP + phosphate + H(+). Part of the ABC transporter complex RbsABC involved in ribose import. Responsible for energy coupling to the transport system. This is Ribose import ATP-binding protein RbsA from Pectobacterium atrosepticum (strain SCRI 1043 / ATCC BAA-672) (Erwinia carotovora subsp. atroseptica).